The following is a 280-amino-acid chain: Elongation factor Ts (280 aa).

An involved in Mg(2+) ion dislocation from EF-Tu region spans residues 82 to 85 (TDFV).

Belongs to the EF-Ts family.

Its subcellular location is the cytoplasm. In terms of biological role, associates with the EF-Tu.GDP complex and induces the exchange of GDP to GTP. It remains bound to the aminoacyl-tRNA.EF-Tu.GTP complex up to the GTP hydrolysis stage on the ribosome. The polypeptide is Elongation factor Ts (Baumannia cicadellinicola subsp. Homalodisca coagulata).